A 501-amino-acid chain; its full sequence is MGERTPMLKMVGVSKSFPGVKALDNVSLMAYGGEVTALMGENGAGKSTLMKILSGVYKKDEGKIFIEGREVEVKGIKSAEEAGITIIHQELSVLNNLTVSENIFLGNEKHSKFTGRINKKLLDERSKMFLEQIGCDIDPNRLVSTLNVGEKQMIEIAKALTKNARIIIMDEPTTALTDVETENLFKVIENLRKKGIAIIYISHRMEEIFKICHRVEVLRDGKYTGSAEIKDIDNDKLIAMMVGRTIEDQFPYRDVKKGDLALEVKNLSCKEGVKGASFTLRKGEILGIAGLMGSGRTELAKTIFGEYKKTSGEISLNGSLININCISDAINNGICYLSEDRKKEGCILGMSVGENMTLCNLKKYENKFKSLDKKEEAKDIEYYIKKINIKTPNKEQFIKNLSGGNQQKVILAKWLMLSPEVLIIDEPTRGIDVGAKKEIYELLNELKASGKAIIMISSDLPEVLGISDRIMVMSEGRISGELNRDEANQESIMKLAVGINN.

2 consecutive ABC transporter domains span residues 8–245 (LKMV…VGRT) and 255–500 (VKKG…VGIN). 40–47 (GENGAGKS) provides a ligand contact to ATP.

This sequence belongs to the ABC transporter superfamily. Ribose importer (TC 3.A.1.2.1) family. The complex is composed of an ATP-binding protein (RbsA), two transmembrane proteins (RbsC) and a solute-binding protein (RbsB).

The protein resides in the cell membrane. It catalyses the reaction D-ribose(out) + ATP + H2O = D-ribose(in) + ADP + phosphate + H(+). Its function is as follows. Part of the ABC transporter complex RbsABC involved in ribose import. Responsible for energy coupling to the transport system. This Clostridium perfringens (strain SM101 / Type A) protein is Ribose import ATP-binding protein RbsA.